The primary structure comprises 280 residues: Foldase protein PrsA 4 (280 aa).

A signal peptide spans 1–21 (MKRKKLVIGSILMGMTLSLSA). A lipid anchor (N-palmitoyl cysteine) is attached at C22. C22 carries the S-diacylglycerol cysteine lipid modification. A PpiC domain is found at 132–222 (KPKLQVSHIL…FGYHIIKLTD (91 aa)).

This sequence belongs to the PrsA family.

The protein resides in the cell membrane. The enzyme catalyses [protein]-peptidylproline (omega=180) = [protein]-peptidylproline (omega=0). Plays a major role in protein secretion by helping the post-translocational extracellular folding of several secreted proteins. This is Foldase protein PrsA 4 (prsA4) from Bacillus cereus (strain ATCC 14579 / DSM 31 / CCUG 7414 / JCM 2152 / NBRC 15305 / NCIMB 9373 / NCTC 2599 / NRRL B-3711).